Consider the following 311-residue polypeptide: MSQQLPVRIATRKSPLALWQAHFVKDALQAAHPGLEVELVTMVTKGDIILDTPLAKVGGKGLFVKELEVAMLEGRADLAVHSMKDVPVEFPEGLGLVTICEREDPRDAFVSNTYNNIDELPQGAVVGTCSLRRQCQLKEARPDLIIKELRGNVGTRLQKLDDGNYDAIILACAGLIRLGLEDRIKSAIEPEQSLPAVGQGAVGIEARLDDDRLRALLEPLNHPETANRVLCERAMNNRLEGGCQVPIGSYSLIDGDQIWLRALVGEPDGSVMIRGEVSGPVSDAEALGTQLADQLLNDGAKEILERLYAEA.

Cysteine 243 is modified (S-(dipyrrolylmethanemethyl)cysteine).

It belongs to the HMBS family. Monomer. Dipyrromethane is required as a cofactor.

The enzyme catalyses 4 porphobilinogen + H2O = hydroxymethylbilane + 4 NH4(+). It participates in porphyrin-containing compound metabolism; protoporphyrin-IX biosynthesis; coproporphyrinogen-III from 5-aminolevulinate: step 2/4. Its function is as follows. Tetrapolymerization of the monopyrrole PBG into the hydroxymethylbilane pre-uroporphyrinogen in several discrete steps. This is Porphobilinogen deaminase from Aliivibrio fischeri (strain ATCC 700601 / ES114) (Vibrio fischeri).